The sequence spans 373 residues: Coiled-coil domain-containing protein 34 (373 aa).

Disordered regions lie at residues 1–112 (MWAA…SLRG) and 118–137 (CASTQVESENNQEEQKQVRL). At Ser52 the chain carries Phosphoserine. A compositionally biased stretch (polar residues) spans 61-76 (NSTRSLLSPLGHQSFQ). Acidic residues predominate over residues 77–101 (FDEDDGDGEDEEDVDDEEDVDEDAH). Residues 152–286 (KEKEERDRLQ…QEWLENAKHK (135 aa)) adopt a coiled-coil conformation. Residues 324–352 (IHMPPPKEAKDLSGRKSKRPVISQPHKSS) are disordered. Basic and acidic residues predominate over residues 328-337 (PPKEAKDLSG).

Expressed in sperm.

Its subcellular location is the cell projection. The protein resides in the cilium. The protein localises to the flagellum. Functionally, involved in spermatogenesis. Has a probable role in anterograde intraflagellar transport which is essential for the formation of sperm flagella. The polypeptide is Coiled-coil domain-containing protein 34 (CCDC34) (Homo sapiens (Human)).